Reading from the N-terminus, the 196-residue chain is Peptidyl-tRNA hydrolase (196 aa).

Y18 is a tRNA binding site. The Proton acceptor role is filled by H23. Positions 69, 71, and 117 each coordinate tRNA.

This sequence belongs to the PTH family. Monomer.

It localises to the cytoplasm. It carries out the reaction an N-acyl-L-alpha-aminoacyl-tRNA + H2O = an N-acyl-L-amino acid + a tRNA + H(+). Functionally, hydrolyzes ribosome-free peptidyl-tRNAs (with 1 or more amino acids incorporated), which drop off the ribosome during protein synthesis, or as a result of ribosome stalling. In terms of biological role, catalyzes the release of premature peptidyl moieties from peptidyl-tRNA molecules trapped in stalled 50S ribosomal subunits, and thus maintains levels of free tRNAs and 50S ribosomes. The sequence is that of Peptidyl-tRNA hydrolase from Marinobacter nauticus (strain ATCC 700491 / DSM 11845 / VT8) (Marinobacter aquaeolei).